A 569-amino-acid polypeptide reads, in one-letter code: MSDDARDTIANGVGEDAAEMPNSDSPAEDAAEVQCGPATTSNEPAPDDHMEEQPEITAMCAESTPPGILDQSKASAADETPLNGEVTEDTLVECVDSVSLEGDTGSEIPLKEQDDAAVDPSSQAGRWAGWGSWGKSLLSSASATVGHGLTAVKEKAGATLRIHSANSASPEGAPTDAENGISGNVTPDQDPARGPHTPPPPGAAGSRGMLSALTNVVQNTGKSVLTGGLDALEFIGKKTMIVLAESDPGFKRTKTLMERTVSLSQMLREAKEKEKQRLAQQLTVERTAHYGMLFDEYQGLSHLEALEILSNESESKVQSFLTSLDGEKLELLKNDLISIKDIFVAKESENEANPEEQGLEESGEEFARMLTELLFELHVAATPDKLNKAMKKAHDWVEEDQSVVSIDVAKGSEEEEKEEGKEEKAEEPEEDKTGGQGAKTVEEVYMLSIESLAEVTARCIEQLHKVAELILHGQEEEKPAQDQARVLIKLTTAMCNEVTSLSKKFTNSLTTVGSNKKAEVLNPMINSVFLEGSNSTTYVQDALQLLLPVLQVSHIRTSCLKATAQPDCS.

3 disordered regions span residues 1–87, 102–126, and 165–208; these read MSDD…GEVT, GDTG…QAGR, and ANSA…GSRG. Thr-197 is subject to Phosphothreonine. Ser-262 bears the Phosphoserine mark. Residues 404–439 form a disordered region; that stretch reads VSIDVAKGSEEEEKEEGKEEKAEEPEEDKTGGQGAK.

Belongs to the FAM114 family. In terms of tissue distribution, over-expressed in brain. Also detected in lung, stomach, and in a lower extent in testis and thymus.

The protein localises to the cytoplasm. In terms of biological role, may play a role in neuronal cell development. This Mus musculus (Mouse) protein is Protein Noxp20 (Fam114a1).